Here is a 218-residue protein sequence, read N- to C-terminus: Chymotrypsin-2 (218 aa).

The 218-residue stretch at 1 to 218 (IVGGTDAPRG…FLDWIQKNQL (218 aa)) folds into the Peptidase S1 domain. An intrachain disulfide couples C25 to C40. Active-site charge relay system residues include H39 and D84. 2 cysteine pairs are disulfide-bonded: C148/C161 and C171/C195. S175 (charge relay system) is an active-site residue.

This sequence belongs to the peptidase S1 family.

It is found in the secreted. The protein localises to the extracellular space. The enzyme catalyses Preferential cleavage: Tyr-|-Xaa, Trp-|-Xaa, Phe-|-Xaa, Leu-|-Xaa.. The sequence is that of Chymotrypsin-2 from Vespa crabro (European hornet).